A 97-amino-acid polypeptide reads, in one-letter code: Co-chaperonin GroES (97 aa).

Belongs to the GroES chaperonin family. Heptamer of 7 subunits arranged in a ring. Interacts with the chaperonin GroEL.

The protein resides in the cytoplasm. In terms of biological role, together with the chaperonin GroEL, plays an essential role in assisting protein folding. The GroEL-GroES system forms a nano-cage that allows encapsulation of the non-native substrate proteins and provides a physical environment optimized to promote and accelerate protein folding. GroES binds to the apical surface of the GroEL ring, thereby capping the opening of the GroEL channel. This is Co-chaperonin GroES from Escherichia fergusonii (strain ATCC 35469 / DSM 13698 / CCUG 18766 / IAM 14443 / JCM 21226 / LMG 7866 / NBRC 102419 / NCTC 12128 / CDC 0568-73).